Here is a 698-residue protein sequence, read N- to C-terminus: UvrABC system protein B (698 aa).

The region spanning alanine 35–glutamate 210 is the Helicase ATP-binding domain. Glycine 48 to serine 55 provides a ligand contact to ATP. The short motif at tyrosine 101–isoleucine 124 is the Beta-hairpin element. Residues glutamine 438–threonine 604 form the Helicase C-terminal domain. The 36-residue stretch at alanine 654 to glutamate 689 folds into the UVR domain.

Belongs to the UvrB family. As to quaternary structure, forms a heterotetramer with UvrA during the search for lesions. Interacts with UvrC in an incision complex.

The protein resides in the cytoplasm. Its function is as follows. The UvrABC repair system catalyzes the recognition and processing of DNA lesions. A damage recognition complex composed of 2 UvrA and 2 UvrB subunits scans DNA for abnormalities. Upon binding of the UvrA(2)B(2) complex to a putative damaged site, the DNA wraps around one UvrB monomer. DNA wrap is dependent on ATP binding by UvrB and probably causes local melting of the DNA helix, facilitating insertion of UvrB beta-hairpin between the DNA strands. Then UvrB probes one DNA strand for the presence of a lesion. If a lesion is found the UvrA subunits dissociate and the UvrB-DNA preincision complex is formed. This complex is subsequently bound by UvrC and the second UvrB is released. If no lesion is found, the DNA wraps around the other UvrB subunit that will check the other stand for damage. This is UvrABC system protein B from Beutenbergia cavernae (strain ATCC BAA-8 / DSM 12333 / CCUG 43141 / JCM 11478 / NBRC 16432 / NCIMB 13614 / HKI 0122).